The primary structure comprises 35 residues: MSDIN-like toxin proprotein 1 (35 aa).

The propeptide occupies 1 to 10; that stretch reads MSDINATRLP. Positions 11–20 form a cross-link, cyclopeptide (Ile-Pro); the sequence is IIIVLGLIIP. A propeptide spanning residues 21–35 is cleaved from the precursor; it reads LCVSDIEMILTRGER.

The protein belongs to the MSDIN fungal toxin family. Processed by the macrocyclase-peptidase enzyme POPB to yield a toxic cyclic decapeptide. POPB first removes 10 residues from the N-terminus. Conformational trapping of the remaining peptide forces the enzyme to release this intermediate rather than proceed to macrocyclization. The enzyme rebinds the remaining peptide in a different conformation and catalyzes macrocyclization of the N-terminal 10 residues.

Functionally, probable toxin that belongs to the MSDIN-like toxin family responsible for a large number of food poisoning cases and deaths. The protein is MSDIN-like toxin proprotein 1 of Amanita rimosa.